We begin with the raw amino-acid sequence, 206 residues long: Ribosomal RNA small subunit methyltransferase G (206 aa).

Residues G73, L78, 124–125 (VE), and R139 each bind S-adenosyl-L-methionine.

It belongs to the methyltransferase superfamily. RNA methyltransferase RsmG family.

It is found in the cytoplasm. It catalyses the reaction guanosine(527) in 16S rRNA + S-adenosyl-L-methionine = N(7)-methylguanosine(527) in 16S rRNA + S-adenosyl-L-homocysteine. Its function is as follows. Specifically methylates the N7 position of guanine in position 527 of 16S rRNA. The protein is Ribosomal RNA small subunit methyltransferase G of Photorhabdus laumondii subsp. laumondii (strain DSM 15139 / CIP 105565 / TT01) (Photorhabdus luminescens subsp. laumondii).